A 243-amino-acid polypeptide reads, in one-letter code: Ras-related protein Rab-12 (243 aa).

The residue at position 1 (Met-1) is an N-acetylmethionine. Residues 1–36 (MDPSAALHRRPAGGSLGAVSPALSGGQARRRKQPPR) form a disordered region. Residues Ser-15, Ser-20, and Ser-24 each carry the phosphoserine modification. Gly-51, Val-52, Gly-53, Lys-54, Thr-55, Ser-72, and Thr-73 together coordinate GTP. A Mg(2+)-binding site is contributed by Thr-55. Short sequence motifs (switch) lie at residues 64 to 78 (DTFC…GVDF) and 96 to 113 (DTAG…YYRS). 2 residues coordinate Mg(2+): Thr-73 and Asp-96. Gly-99 contributes to the GTP binding site. Phosphoserine; by LRRK2 is present on Ser-105. GTP contacts are provided by Asn-154, Lys-155, Asp-157, Ser-185, Ala-186, and Lys-187. S-geranylgeranyl cysteine attachment occurs at residues Cys-242 and Cys-243.

The protein belongs to the small GTPase superfamily. Rab family. Interacts with RABIF and OPTN. Interacts with LRRK2; interaction facilitates phosphorylation of Ser-105. Interacts with GDI1, GDI2, CHM and CHML; these interactions are disrupted by phosphorylation on Ser-105. Interacts with RILPL1 and RILPL2; these interactions are dependent on phosphorylation of Ser-105. It depends on Mg(2+) as a cofactor. In terms of processing, phosphorylation of Ser-105 in the switch II region by LRRK2 prevents the association of RAB regulatory proteins, including CHM, CHML and RAB GDP dissociation inhibitors GDI1 and GDI2. As to expression, ubiquitously expressed.

The protein localises to the recycling endosome membrane. It localises to the lysosome membrane. The protein resides in the golgi apparatus membrane. It is found in the cytoplasmic vesicle. Its subcellular location is the autophagosome. It catalyses the reaction GTP + H2O = GDP + phosphate + H(+). With respect to regulation, regulated by guanine nucleotide exchange factors (GEFs) including DENND3 which promote the exchange of bound GDP for free GTP. Regulated by GTPase activating proteins (GAPs) which increase the GTP hydrolysis activity. Inhibited by GDP dissociation inhibitors (GDIs). In terms of biological role, the small GTPases Rab are key regulators of intracellular membrane trafficking, from the formation of transport vesicles to their fusion with membranes. Rabs cycle between an inactive GDP-bound form and an active GTP-bound form that is able to recruit to membranes different set of downstream effectors directly responsible for vesicle formation, movement, tethering and fusion. RAB12 may play a role in protein transport from recycling endosomes to lysosomes regulating, for instance, the degradation of the transferrin receptor. Involved in autophagy. The sequence is that of Ras-related protein Rab-12 from Mus musculus (Mouse).